Here is a 111-residue protein sequence, read N- to C-terminus: Dynein light chain Tctex-type (111 aa).

This sequence belongs to the dynein light chain Tctex-type family.

The protein resides in the cytoplasm. It is found in the cytoskeleton. Functionally, acts as a non-catalytic accessory component of a dynein complex. The sequence is that of Dynein light chain Tctex-type (dlcA) from Dictyostelium discoideum (Social amoeba).